The following is a 236-amino-acid chain: Small ribosomal subunit protein uS2c (236 aa).

The protein belongs to the universal ribosomal protein uS2 family.

The protein localises to the plastid. Its subcellular location is the chloroplast. The protein is Small ribosomal subunit protein uS2c (rps2) of Nymphaea alba (White water-lily).